Here is a 424-residue protein sequence, read N- to C-terminus: D-inositol 3-phosphate glycosyltransferase (424 aa).

His21 contributes to the 1D-myo-inositol 3-phosphate binding site. UDP-N-acetyl-alpha-D-glucosamine is bound by residues 27–28 (QP) and Gly35. Residues 32-37 (DAGGMN), Lys90, Tyr123, Thr147, and Arg167 contribute to the 1D-myo-inositol 3-phosphate site. 3 residues coordinate UDP-N-acetyl-alpha-D-glucosamine: Arg241, Lys246, and Gln299. Residues Phe308, Gln309, and Ala311 each coordinate Mg(2+). Positions 321 and 329 each coordinate UDP-N-acetyl-alpha-D-glucosamine. Thr335 serves as a coordination point for Mg(2+).

The protein belongs to the glycosyltransferase group 1 family. MshA subfamily. In terms of assembly, homodimer.

The catalysed reaction is 1D-myo-inositol 3-phosphate + UDP-N-acetyl-alpha-D-glucosamine = 1D-myo-inositol 2-acetamido-2-deoxy-alpha-D-glucopyranoside 3-phosphate + UDP + H(+). Its function is as follows. Catalyzes the transfer of a N-acetyl-glucosamine moiety to 1D-myo-inositol 3-phosphate to produce 1D-myo-inositol 2-acetamido-2-deoxy-glucopyranoside 3-phosphate in the mycothiol biosynthesis pathway. This chain is D-inositol 3-phosphate glycosyltransferase, found in Mycobacterium avium (strain 104).